The sequence spans 544 residues: Protein angel homolog 2 (544 aa).

It belongs to the CCR4/nocturin family.

This Mus musculus (Mouse) protein is Protein angel homolog 2 (Angel2).